The following is an 847-amino-acid chain: B-cell receptor CD22 (847 aa).

The first 19 residues, 1 to 19, serve as a signal peptide directing secretion; sequence MHLLGPWLLLLVLEYLAFS. Positions 20-138 constitute an Ig-like V-type domain; the sequence is DSSKWVFEHP…MERIHLNVSE (119 aa). The Extracellular portion of the chain corresponds to 20-687; that stretch reads DSSKWVFEHP…YYSPETIGRR (668 aa). Disulfide bonds link cysteine 39–cysteine 167, cysteine 44–cysteine 102, and cysteine 161–cysteine 219. N-linked (GlcNAc...) asparagine glycans are attached at residues asparagine 67, asparagine 101, and asparagine 112. Residue arginine 120 coordinates N-acetylneuraminate. Asparagine 135, asparagine 164, and asparagine 231 each carry an N-linked (GlcNAc...) asparagine glycan. Ig-like C2-type domains are found at residues 143–235, 242–326, 331–416, 419–500, 505–582, and 593–676; these read PHIQ…DTVQ, PKLE…VFLQ, PEPS…LDVQ, PKKV…VALN, PRDV…QTAS, and PRRL…STLT. 4 disulfides stabilise this stretch: cysteine 265/cysteine 309, cysteine 353/cysteine 396, cysteine 442/cysteine 484, and cysteine 529/cysteine 571. Residues asparagine 363, asparagine 445, and asparagine 479 are each glycosylated (N-linked (GlcNAc...) asparagine). N-linked (GlcNAc...) asparagine glycans are attached at residues asparagine 574 and asparagine 634. An intrachain disulfide couples cysteine 616 to cysteine 659. A helical membrane pass occupies residues 688–706; sequence VAVGLGSCLAILILAICGL. The Cytoplasmic segment spans residues 707–847; the sequence is KLQRRWKRTQ…ENVDYVILKH (141 aa). Phosphoserine is present on residues serine 725, serine 726, and serine 729. 2 consecutive short sequence motifs (ITIM motif) follow at residues 760 to 765 and 794 to 799; these read ISYTTL and VTYSAL. Tyrosine 762 is modified (phosphotyrosine). Phosphotyrosine is present on residues tyrosine 807, tyrosine 822, and tyrosine 842. Short sequence motifs (ITIM motif) lie at residues 820–825 and 840–845; these read IHYSEL and VDYVIL.

This sequence belongs to the immunoglobulin superfamily. SIGLEC (sialic acid binding Ig-like lectin) family. As to quaternary structure, predominantly monomer of isoform CD22-beta. Also found as heterodimer of isoform CD22-beta and a shorter isoform. Interacts with PTPN6/SHP-1, LYN, SYK, PIK3R1/PIK3R2 and PLCG1 upon phosphorylation. Interacts with GRB2, INPP5D and SHC1 upon phosphorylation. May form a complex with INPP5D/SHIP, GRB2 and SHC1. Phosphorylation of Tyr-762, Tyr-807 and Tyr-822 are involved in binding to SYK, GRB2 and SYK, respectively. Phosphorylation of Tyr-842 is involved in binding to SYK, PLCG2 and PIK3R1/PIK3R2. Post-translationally, phosphorylated on tyrosine residues by LYN. In terms of tissue distribution, B-lymphocytes.

It localises to the cell membrane. Its function is as follows. Most highly expressed siglec (sialic acid-binding immunoglobulin-like lectin) on B-cells that plays a role in various aspects of B-cell biology including differentiation, antigen presentation, and trafficking to bone marrow. Binds to alpha 2,6-linked sialic acid residues of surface molecules such as CD22 itself, CD45 and IgM in a cis configuration. Can also bind to ligands on other cells as an adhesion molecule in a trans configuration. Acts as an inhibitory coreceptor on the surface of B-cells and inhibits B-cell receptor induced signaling, characterized by inhibition of the calcium mobilization and cellular activation. Mechanistically, the immunoreceptor tyrosine-based inhibitory motif domain is phosphorylated by the Src kinase LYN, which in turn leads to the recruitment of the protein tyrosine phosphatase 1/PTPN6, leading to the negative regulation of BCR signaling. If this negative signaling from is of sufficient strength, apoptosis of the B-cell can be induced. The protein is B-cell receptor CD22 of Homo sapiens (Human).